The following is a 280-amino-acid chain: 4-diphosphocytidyl-2-C-methyl-D-erythritol kinase (280 aa).

Residue K8 is part of the active site. 91-101 lines the ATP pocket; that stretch reads PVAAGLAGGSA. D133 is an active-site residue.

This sequence belongs to the GHMP kinase family. IspE subfamily.

The catalysed reaction is 4-CDP-2-C-methyl-D-erythritol + ATP = 4-CDP-2-C-methyl-D-erythritol 2-phosphate + ADP + H(+). It participates in isoprenoid biosynthesis; isopentenyl diphosphate biosynthesis via DXP pathway; isopentenyl diphosphate from 1-deoxy-D-xylulose 5-phosphate: step 3/6. Catalyzes the phosphorylation of the position 2 hydroxy group of 4-diphosphocytidyl-2C-methyl-D-erythritol. This is 4-diphosphocytidyl-2-C-methyl-D-erythritol kinase from Clostridium acetobutylicum (strain ATCC 824 / DSM 792 / JCM 1419 / IAM 19013 / LMG 5710 / NBRC 13948 / NRRL B-527 / VKM B-1787 / 2291 / W).